The chain runs to 429 residues: Metacaspase-1A (429 aa).

Positions Met-1–Gly-68 are disordered. Over residues Ser-8–Pro-19 the composition is skewed to gly residues. Residues Gly-20–Gln-45 are compositionally biased toward low complexity. A compositionally biased stretch (polar residues) spans His-46–Asn-62. Catalysis depends on residues His-220 and Cys-276.

The protein belongs to the peptidase C14B family.

Involved in cell death (apoptosis). In Aspergillus clavatus (strain ATCC 1007 / CBS 513.65 / DSM 816 / NCTC 3887 / NRRL 1 / QM 1276 / 107), this protein is Metacaspase-1A (casA).